The following is a 376-amino-acid chain: Mitogen-activated protein kinase 2 (376 aa).

Residues 32–319 enclose the Protein kinase domain; that stretch reads YVPIKPIGRG…VTEALQHPYM (288 aa). Residues 38 to 46 and Lys61 each bind ATP; that span reads IGRGAYGVV. Asp158 (proton acceptor) is an active-site residue. Thr191 is subject to Phosphothreonine. The TXY signature appears at 191–193; sequence TEY. The residue at position 193 (Tyr193) is a Phosphotyrosine. At Thr196 the chain carries Phosphothreonine.

The protein belongs to the protein kinase superfamily. CMGC Ser/Thr protein kinase family. MAP kinase subfamily. In terms of assembly, interacts with MKK3. Post-translationally, dually phosphorylated on Thr-191 and Tyr-193, which activates the enzyme. Phosphorylated on Ser residue. In terms of tissue distribution, highest levels in the stem. Present in the leaf, root and flower, but not in seeds.

It catalyses the reaction L-seryl-[protein] + ATP = O-phospho-L-seryl-[protein] + ADP + H(+). The enzyme catalyses L-threonyl-[protein] + ATP = O-phospho-L-threonyl-[protein] + ADP + H(+). Its activity is regulated as follows. Activated by threonine and tyrosine phosphorylation. The chain is Mitogen-activated protein kinase 2 (MPK2) from Arabidopsis thaliana (Mouse-ear cress).